We begin with the raw amino-acid sequence, 266 residues long: Putative carbamate hydrolase RutD (266 aa).

Residues 14 to 115 (PVVVLISGLG…TVLVSVNGWL (102 aa)) form the AB hydrolase-1 domain.

The protein belongs to the AB hydrolase superfamily. Hydrolase RutD family.

It catalyses the reaction carbamate + 2 H(+) = NH4(+) + CO2. Functionally, involved in pyrimidine catabolism. May facilitate the hydrolysis of carbamate, a reaction that can also occur spontaneously. This chain is Putative carbamate hydrolase RutD, found in Escherichia coli O9:H4 (strain HS).